A 126-amino-acid polypeptide reads, in one-letter code: C-type natriuretic peptide (126 aa).

Residues 1 to 23 form the signal peptide; the sequence is MHLSQLIACALLLALLSLRPSEA. The segment at 19 to 71 is disordered; sequence RPSEAKPGTPPKVPRTPPGEELAEPQAAGGNQKKGDKTPGGGGANLKGDRSRL. The propeptide occupies 24–73; that stretch reads KPGTPPKVPRTPPGEELAEPQAAGGNQKKGDKTPGGGGANLKGDRSRLLR. A compositionally biased stretch (pro residues) spans 26 to 35; that stretch reads GTPPKVPRTP. A disulfide bond links Cys-110 and Cys-126.

Belongs to the natriuretic peptide family. Degraded by IDE (in vitro). As to expression, expressed exclusively in brain.

The protein localises to the secreted. Hormone which plays a role in endochondral ossification through regulation of cartilaginous growth plate chondrocytes proliferation and differentiation. May also be vasoactive and natriuretic. Acts by specifically binding and stimulating NPR2 to produce cGMP. Binds the clearance receptor NPR3. In Rattus norvegicus (Rat), this protein is C-type natriuretic peptide (Nppc).